An 819-amino-acid polypeptide reads, in one-letter code: MSKTLLSRIKPLSNPHASNSFRSHLPITPRIKKLVSDTVSILKTQQNWSQILDDCFADEEVRFVDISPFVFDRIQDVEIGVKLFDWLSSEKKDEFFSNGFACSSFLKLLARYRIFNEIEDVLGNLRNENVKLTHEALSHVLHAYAESGSLSKAVEIYDYVVELYDSVPDVIACNSLLSLLVKSRRLGDARKVYDEMCDRGDSVDNYSTCILVKGMCNEGKVEVGRKLIEGRWGKGCIPNIVFYNTIIGGYCKLGDIENAYLVFKELKLKGFMPTLETFGTMINGFCKEGDFVASDRLLSEVKERGLRVSVWFLNNIIDAKYRHGYKVDPAESIGWIIANDCKPDVATYNILINRLCKEGKKEVAVGFLDEASKKGLIPNNLSYAPLIQAYCKSKEYDIASKLLLQMAERGCKPDIVTYGILIHGLVVSGHMDDAVNMKVKLIDRGVSPDAAIYNMLMSGLCKTGRFLPAKLLFSEMLDRNILPDAYVYATLIDGFIRSGDFDEARKVFSLSVEKGVKVDVVHHNAMIKGFCRSGMLDEALACMNRMNEEHLVPDKFTYSTIIDGYVKQQDMATAIKIFRYMEKNKCKPNVVTYTSLINGFCCQGDFKMAEETFKEMQLRDLVPNVVTYTTLIRSLAKESSTLEKAVYYWELMMTNKCVPNEVTFNCLLQGFVKKTSGKVLAEPDGSNHGQSSLFSEFFHRMKSDGWSDHAAAYNSALVCLCVHGMVKTACMFQDKMVKKGFSPDPVSFAAILHGFCVVGNSKQWRNMDFCNLGEKGLEVAVRYSQVLEQHLPQPVICEASTILHAMVEKADTKEPVESP.

PPR repeat units follow at residues 98–132 (NGFA…NVKL), 133–163 (THEA…VVEL), 169–203 (DVIA…GDSV), 204–238 (DNYS…GCIP), 239–273 (NIVF…GFMP), 274–308 (TLET…GLRV), 309–343 (SVWF…DCKP), 344–378 (DVAT…GLIP), 379–413 (NNLS…GCKP), 414–448 (DIVT…GVSP), 449–483 (DAAI…NILP), 484–518 (DAYV…GVKV), 519–553 (DVVH…HLVP), 554–588 (DKFT…KCKP), 589–623 (NVVT…DLVP), 624–659 (NVVT…KCVP), 709–743 (HAAA…GFSP), and 744–779 (DPVS…GLEV).

Belongs to the PPR family. P subfamily.

The sequence is that of Pentatricopeptide repeat-containing protein At1g52620 from Arabidopsis thaliana (Mouse-ear cress).